The primary structure comprises 1866 residues: Protein strawberry notch homolog (1866 aa).

Positions 19 to 28 are enriched in low complexity; that stretch reads QQSSPTPSTS. 5 disordered regions span residues 19-63, 132-151, 156-253, 561-581, and 1112-1308; these read QQSS…HSSS, TAPTVNQSEPSTPTVTIVPK, LFET…GLPI, GMASPRLQTTPQPLTKSQKAK, and GLSG…ARGS. 2 stretches are compositionally biased toward polar residues: residues 37-63 and 134-146; these read QSFSNNTHTPSVSQFFDETSNDSHSSS and PTVNQSEPSTPTV. The segment covering 161 to 176 has biased composition (low complexity); it reads TADSPTPSGDTSTTAS. 2 stretches are compositionally biased toward polar residues: residues 191 to 203 and 210 to 228; these read DRQNPMFVQTARS and TPSTSATVSPHITSSLTQR. A compositionally biased stretch (low complexity) spans 229 to 239; the sequence is SHTSSPASSAS. A compositionally biased stretch (polar residues) spans 566-577; sequence RLQTTPQPLTKS. Residues 1112–1126 are compositionally biased toward low complexity; that stretch reads GLSGIGRSSMSSSTG. Residues 1142 to 1152 show a composition bias toward acidic residues; sequence DGSDDEVENDM. The span at 1164-1177 shows a compositional bias: basic and acidic residues; sequence ESAREEAEGARTLE. Acidic residues predominate over residues 1194–1213; the sequence is SSSDDSDEEVVKDEDEDEEA. Composition is skewed to basic and acidic residues over residues 1262-1281 and 1290-1304; these read RDEEEAERLREKVRKREERR and RRAEREKQRRNEELQ.

The protein belongs to the SBNO family. As to expression, expressed in the somatic gonad, neurons, hypodermal cells, seam cells, the excretory system, and intestinal cells (at protein level).

It localises to the nucleus. Transcriptional activator that functions upstream of the let-60/Ras and let-23/EGFR signaling pathways to positively regulate lin-3 expression and thereby promote vulval induction. Plays a role in excretory duct development. Plays a role in male tail development. In Caenorhabditis elegans, this protein is Protein strawberry notch homolog.